A 137-amino-acid chain; its full sequence is Large ribosomal subunit protein uL16 (137 aa).

Positions Met-1–Arg-16 are enriched in basic residues. Residues Met-1–Lys-22 form a disordered region.

The protein belongs to the universal ribosomal protein uL16 family. In terms of assembly, part of the 50S ribosomal subunit.

Its function is as follows. Binds 23S rRNA and is also seen to make contacts with the A and possibly P site tRNAs. In Jannaschia sp. (strain CCS1), this protein is Large ribosomal subunit protein uL16.